Consider the following 445-residue polypeptide: Argininosuccinate synthase (445 aa).

ATP-binding positions include 17–25 (AFSGGLDTS) and A43. L-citrulline is bound at residue Y99. G129 and T131 together coordinate ATP. 3 residues coordinate L-aspartate: T131, N135, and D136. N135 serves as a coordination point for L-citrulline. D136 contacts ATP. Residues R139 and S192 each contribute to the L-citrulline site. D194 is an ATP binding site. Residues T201, E203, and E280 each contribute to the L-citrulline site.

Belongs to the argininosuccinate synthase family. Type 2 subfamily. Homotetramer.

The protein localises to the cytoplasm. The catalysed reaction is L-citrulline + L-aspartate + ATP = 2-(N(omega)-L-arginino)succinate + AMP + diphosphate + H(+). Its pathway is amino-acid biosynthesis; L-arginine biosynthesis; L-arginine from L-ornithine and carbamoyl phosphate: step 2/3. The sequence is that of Argininosuccinate synthase (argG) from Ralstonia nicotianae (strain ATCC BAA-1114 / GMI1000) (Ralstonia solanacearum).